The chain runs to 260 residues: Flap endonuclease Xni (260 aa).

Residue aspartate 104 coordinates Mg(2+). Positions 160 to 250 constitute a 5'-3' exonuclease domain; the sequence is VSPQQLTDYW…NGNLQQLRLP (91 aa). The K(+) site is built by leucine 171, alanine 172, proline 180, valine 182, and isoleucine 185. Residues 184-189 are interaction with DNA; that stretch reads GIGPKS.

Belongs to the Xni family. Mg(2+) serves as cofactor. Requires K(+) as cofactor.

Has flap endonuclease activity. During DNA replication, flap endonucleases cleave the 5'-overhanging flap structure that is generated by displacement synthesis when DNA polymerase encounters the 5'-end of a downstream Okazaki fragment. The polypeptide is Flap endonuclease Xni (Pectobacterium atrosepticum (strain SCRI 1043 / ATCC BAA-672) (Erwinia carotovora subsp. atroseptica)).